A 237-amino-acid polypeptide reads, in one-letter code: NADH-ubiquinone oxidoreductase assembly factor N7BML (237 aa).

Residues 214 to 223 (VEKERDDSGK) are compositionally biased toward basic and acidic residues. The tract at residues 214 to 237 (VEKERDDSGKPAEWTPKAAVRRRG) is disordered.

Belongs to the complex I NDUFA12 subunit family.

It localises to the mitochondrion. Its function is as follows. Acts as an assembly factor of mitochondrial complex I. This chain is NADH-ubiquinone oxidoreductase assembly factor N7BML, found in Yarrowia lipolytica (strain CLIB 122 / E 150) (Yeast).